Consider the following 169-residue polypeptide: Crossover junction endodeoxyribonuclease RuvC (169 aa).

Residues D11, E71, and H143 contribute to the active site. Mg(2+) is bound by residues D11, E71, and H143.

Belongs to the RuvC family. In terms of assembly, homodimer which binds Holliday junction (HJ) DNA. The HJ becomes 2-fold symmetrical on binding to RuvC with unstacked arms; it has a different conformation from HJ DNA in complex with RuvA. In the full resolvosome a probable DNA-RuvA(4)-RuvB(12)-RuvC(2) complex forms which resolves the HJ. Requires Mg(2+) as cofactor.

It localises to the cytoplasm. The catalysed reaction is Endonucleolytic cleavage at a junction such as a reciprocal single-stranded crossover between two homologous DNA duplexes (Holliday junction).. Functionally, the RuvA-RuvB-RuvC complex processes Holliday junction (HJ) DNA during genetic recombination and DNA repair. Endonuclease that resolves HJ intermediates. Cleaves cruciform DNA by making single-stranded nicks across the HJ at symmetrical positions within the homologous arms, yielding a 5'-phosphate and a 3'-hydroxyl group; requires a central core of homology in the junction. The consensus cleavage sequence is 5'-(A/T)TT(C/G)-3'. Cleavage occurs on the 3'-side of the TT dinucleotide at the point of strand exchange. HJ branch migration catalyzed by RuvA-RuvB allows RuvC to scan DNA until it finds its consensus sequence, where it cleaves and resolves the cruciform DNA. This is Crossover junction endodeoxyribonuclease RuvC from Mesorhizobium japonicum (strain LMG 29417 / CECT 9101 / MAFF 303099) (Mesorhizobium loti (strain MAFF 303099)).